The chain runs to 380 residues: Putative glutamate--cysteine ligase 2 (380 aa).

The protein belongs to the glutamate--cysteine ligase type 2 family. YbdK subfamily.

It catalyses the reaction L-cysteine + L-glutamate + ATP = gamma-L-glutamyl-L-cysteine + ADP + phosphate + H(+). ATP-dependent carboxylate-amine ligase which exhibits weak glutamate--cysteine ligase activity. This chain is Putative glutamate--cysteine ligase 2, found in Pseudomonas entomophila (strain L48).